The following is a 60-amino-acid chain: Large ribosomal subunit protein bL32 (60 aa).

Over residues 1 to 20 (MAKPARHTSKAKRNKRRTHY) the composition is skewed to basic residues. Residues 1 to 22 (MAKPARHTSKAKRNKRRTHYKL) are disordered.

The protein belongs to the bacterial ribosomal protein bL32 family.

In Streptococcus agalactiae serotype V (strain ATCC BAA-611 / 2603 V/R), this protein is Large ribosomal subunit protein bL32.